A 219-amino-acid polypeptide reads, in one-letter code: Guanylate kinase (219 aa).

The 180-residue stretch at 15–194 (GLMFVLSSPS…AFAEVHSILK (180 aa)) folds into the Guanylate kinase-like domain. 22 to 29 (SPSGAGKT) contacts ATP.

It belongs to the guanylate kinase family.

The protein localises to the cytoplasm. The catalysed reaction is GMP + ATP = GDP + ADP. In terms of biological role, essential for recycling GMP and indirectly, cGMP. The polypeptide is Guanylate kinase (Rhodopseudomonas palustris (strain BisB18)).